A 243-amino-acid polypeptide reads, in one-letter code: Protein GIGAS CELL1 (243 aa).

Interacts with APC/C activators such as FZR1, FZR2, FZR3, CDC20.1 and CDC20.5. In terms of processing, phosphorylated by CDKA-1 in complex with CYCA1-2. As to expression, expressed in rapidly dividing tissues such as shoot apical meristem and young leaves. Associated with cell division but also with specific cell types.

Functionally, negative regulator of the anaphase-promoting complex/cyclosome (APC/C) ubiquitin ligase required for proper mitotic and meiotic progression and cell fate determination. Involved in entry into both meiosis I and meiosis II. Prevents endomitosis by preferentially inhibiting APC/C(CDC20). Required for megagametophyte and endosperm development. Triggers mitotic cyclins (e.g. CYCB1-1 and CYCB1-2) accumulation. Confers immunity to bacterial pathogens (e.g. Pseudomonas syringae pv. tomato DC3000), which is associated with increased expression of disease resistance (R) genes. GIG1 and PANS1 are part of a network linking centromere cohesion and cell cycle progression through control of APC/C activity. The sequence is that of Protein GIGAS CELL1 (GIG1) from Arabidopsis thaliana (Mouse-ear cress).